The chain runs to 202 residues: Peptide deformylase (202 aa).

Positions 121 and 163 each coordinate Fe cation. The active site involves Glu164. Fe cation is bound at residue His167.

Belongs to the polypeptide deformylase family. Fe(2+) is required as a cofactor.

It catalyses the reaction N-terminal N-formyl-L-methionyl-[peptide] + H2O = N-terminal L-methionyl-[peptide] + formate. Functionally, removes the formyl group from the N-terminal Met of newly synthesized proteins. Requires at least a dipeptide for an efficient rate of reaction. N-terminal L-methionine is a prerequisite for activity but the enzyme has broad specificity at other positions. The chain is Peptide deformylase from Synechococcus sp. (strain CC9311).